The sequence spans 330 residues: Olfactory receptor 5P70 (330 aa).

At 1 to 28 (MAFLEDGNHTIVTEFILLGLTDDPVLRD) the chain is on the extracellular side. A glycan (N-linked (GlcNAc...) asparagine) is linked at N8. Residues 29–49 (ILFTIILCIYLVTVSGNLSTI) traverse the membrane as a helical segment. The Cytoplasmic segment spans residues 50 to 57 (LLIRVSSQ). A helical membrane pass occupies residues 58–78 (LHHPMYFFLSHLASVDIGISS). Residues 79–102 (SVTPNMLANFLVKPNTISYIGCSI) lie on the Extracellular side of the membrane. A disulfide bond links C100 and C192. A helical transmembrane segment spans residues 103–123 (QFTSAVFLATVECFLLAAMAY). At 124-136 (DRFVAICNPLLYS) the chain is on the cytoplasmic side. The chain crosses the membrane as a helical span at residues 137–157 (TKMSREACIQLVVGSYIQGLL). The Extracellular portion of the chain corresponds to 158 to 199 (NASFFTLSFFSLIFCGPNRINHFYCDLAPLVELSCSDVTLAV). Residues 200 to 220 (VITSISAGFITLTTVFVIAIS) form a helical membrane-spanning segment. Residues 221–240 (YSCIFITIMKMHSTESRYKA) are Cytoplasmic-facing. The helical transmembrane segment at 241–261 (FSTCTSHLTAVTLFYGTTMFI) threads the bilayer. The Extracellular portion of the chain corresponds to 262 to 274 (YVMPKSSYSTDQN). A helical membrane pass occupies residues 275 to 295 (KVLSVFYMVVIPMLNPLIYSL). Topologically, residues 296 to 330 (RNNEIKGALKRYLGKKIFSYGNLFCKTHYNDTHQV) are cytoplasmic.

The protein belongs to the G-protein coupled receptor 1 family.

It is found in the cell membrane. Potential odorant receptor. The polypeptide is Olfactory receptor 5P70 (Mus musculus (Mouse)).